Reading from the N-terminus, the 272-residue chain is Putative phosphoenolpyruvate synthase regulatory protein (272 aa).

152–159 (GVSRSGKT) lines the ADP pocket.

The protein belongs to the pyruvate, phosphate/water dikinase regulatory protein family. PSRP subfamily.

The enzyme catalyses [pyruvate, water dikinase] + ADP = [pyruvate, water dikinase]-phosphate + AMP + H(+). It carries out the reaction [pyruvate, water dikinase]-phosphate + phosphate + H(+) = [pyruvate, water dikinase] + diphosphate. Functionally, bifunctional serine/threonine kinase and phosphorylase involved in the regulation of the phosphoenolpyruvate synthase (PEPS) by catalyzing its phosphorylation/dephosphorylation. The polypeptide is Putative phosphoenolpyruvate synthase regulatory protein (Methylibium petroleiphilum (strain ATCC BAA-1232 / LMG 22953 / PM1)).